The sequence spans 70 residues: uncharacterized protein (70 aa).

Residues 50–70 traverse the membrane as a helical segment; sequence INVVLVLIIALIIFILMLDGV.

Its subcellular location is the membrane. This is an uncharacterized protein from Dictyostelium discoideum (Social amoeba).